The primary structure comprises 320 residues: tRNA U34 carboxymethyltransferase (320 aa).

Residues Lys-89, Trp-103, Lys-108, Gly-128, 150-152, 179-180, Met-194, Tyr-198, and Arg-313 each bind carboxy-S-adenosyl-L-methionine; these read DPT and LE.

This sequence belongs to the class I-like SAM-binding methyltransferase superfamily. CmoB family. Homotetramer.

The enzyme catalyses carboxy-S-adenosyl-L-methionine + 5-hydroxyuridine(34) in tRNA = 5-carboxymethoxyuridine(34) in tRNA + S-adenosyl-L-homocysteine + H(+). Functionally, catalyzes carboxymethyl transfer from carboxy-S-adenosyl-L-methionine (Cx-SAM) to 5-hydroxyuridine (ho5U) to form 5-carboxymethoxyuridine (cmo5U) at position 34 in tRNAs. The chain is tRNA U34 carboxymethyltransferase from Haemophilus ducreyi (strain 35000HP / ATCC 700724).